Consider the following 189-residue polypeptide: Probable thymidylate kinase 1 (189 aa).

Residue 9–16 coordinates ATP; it reads GIDGSGKT.

The protein belongs to the thymidylate kinase family.

The enzyme catalyses dTMP + ATP = dTDP + ADP. The protein is Probable thymidylate kinase 1 (tmk1) of Saccharolobus solfataricus (strain ATCC 35092 / DSM 1617 / JCM 11322 / P2) (Sulfolobus solfataricus).